The sequence spans 193 residues: Acyl carrier protein phosphodiesterase (193 aa).

This sequence belongs to the AcpH family.

The enzyme catalyses holo-[ACP] + H2O = apo-[ACP] + (R)-4'-phosphopantetheine + H(+). Its function is as follows. Converts holo-ACP to apo-ACP by hydrolytic cleavage of the phosphopantetheine prosthetic group from ACP. The sequence is that of Acyl carrier protein phosphodiesterase from Salmonella dublin (strain CT_02021853).